We begin with the raw amino-acid sequence, 131 residues long: Small ribosomal subunit protein uS11 (131 aa).

It belongs to the universal ribosomal protein uS11 family. As to quaternary structure, part of the 30S ribosomal subunit. Interacts with proteins S7 and S18. Binds to IF-3.

Located on the platform of the 30S subunit, it bridges several disparate RNA helices of the 16S rRNA. Forms part of the Shine-Dalgarno cleft in the 70S ribosome. This is Small ribosomal subunit protein uS11 from Thermotoga neapolitana (strain ATCC 49049 / DSM 4359 / NBRC 107923 / NS-E).